The following is a 327-amino-acid chain: Beta-ketoacyl-[acyl-carrier-protein] synthase III (327 aa).

Residues Cys-112 and His-253 contribute to the active site. An ACP-binding region spans residues Gln-254–Arg-258. Residue Asn-283 is part of the active site.

This sequence belongs to the thiolase-like superfamily. FabH family. In terms of assembly, homodimer.

The protein localises to the cytoplasm. The enzyme catalyses malonyl-[ACP] + acetyl-CoA + H(+) = 3-oxobutanoyl-[ACP] + CO2 + CoA. The protein operates within lipid metabolism; fatty acid biosynthesis. Catalyzes the condensation reaction of fatty acid synthesis by the addition to an acyl acceptor of two carbons from malonyl-ACP. Catalyzes the first condensation reaction which initiates fatty acid synthesis and may therefore play a role in governing the total rate of fatty acid production. Possesses both acetoacetyl-ACP synthase and acetyl transacylase activities. Its substrate specificity determines the biosynthesis of branched-chain and/or straight-chain of fatty acids. The chain is Beta-ketoacyl-[acyl-carrier-protein] synthase III from Chlamydia trachomatis serovar A (strain ATCC VR-571B / DSM 19440 / HAR-13).